Consider the following 447-residue polypeptide: Asparagine--tRNA ligase (447 aa).

Belongs to the class-II aminoacyl-tRNA synthetase family. In terms of assembly, homodimer.

The protein localises to the cytoplasm. The enzyme catalyses tRNA(Asn) + L-asparagine + ATP = L-asparaginyl-tRNA(Asn) + AMP + diphosphate + H(+). The polypeptide is Asparagine--tRNA ligase (Streptococcus pneumoniae serotype 4 (strain ATCC BAA-334 / TIGR4)).